Here is a 97-residue protein sequence, read N- to C-terminus: Putative membrane protein insertion efficiency factor (97 aa).

The interval 77–97 (VPDAPASPSPSSSCSCKGPHP) is disordered. Over residues 85-97 (SPSSSCSCKGPHP) the composition is skewed to low complexity.

The protein belongs to the UPF0161 family.

Its subcellular location is the cell inner membrane. Its function is as follows. Could be involved in insertion of integral membrane proteins into the membrane. The polypeptide is Putative membrane protein insertion efficiency factor (Xanthomonas euvesicatoria pv. vesicatoria (strain 85-10) (Xanthomonas campestris pv. vesicatoria)).